We begin with the raw amino-acid sequence, 171 residues long: Peptide deformylase 1 (171 aa).

Residues C99 and H141 each coordinate Fe cation. E142 is a catalytic residue. H145 is a binding site for Fe cation.

Belongs to the polypeptide deformylase family. The cofactor is Fe(2+).

The catalysed reaction is N-terminal N-formyl-L-methionyl-[peptide] + H2O = N-terminal L-methionyl-[peptide] + formate. Removes the formyl group from the N-terminal Met of newly synthesized proteins. Requires at least a dipeptide for an efficient rate of reaction. N-terminal L-methionine is a prerequisite for activity but the enzyme has broad specificity at other positions. The protein is Peptide deformylase 1 of Xanthomonas campestris pv. campestris (strain ATCC 33913 / DSM 3586 / NCPPB 528 / LMG 568 / P 25).